The chain runs to 220 residues: Protein DGCR6L (220 aa).

Positions 76–159 (KSLYNQRLRL…ADQQSTLEKA (84 aa)) form a coiled coil.

This sequence belongs to the gonadal family. Widely expressed in fetal and adult tissues. Highest expression in liver, heart and skeletal muscle. Lower levels in pancreas and placenta. Weak expression in brain.

The protein resides in the nucleus. In terms of biological role, may play a role in neural crest cell migration into the third and fourth pharyngeal pouches. In Homo sapiens (Human), this protein is Protein DGCR6L (DGCR6L).